We begin with the raw amino-acid sequence, 316 residues long: Small kinetochore-associated protein (316 aa).

S128 is modified (phosphoserine). The segment at 159 to 316 (VRKGYKPLSK…LKEMEQLLEM (158 aa)) is interaction with SPAG5. Coiled-coil stretches lie at residues 166-216 (LSKQ…FRDN) and 248-316 (SMLL…LLEM).

In terms of assembly, part of an astrin (SPAG5)-kinastrin (SKAP) complex containing KNSTRN, SPAG5, PLK1, DYNLL1 and SGO2. Interacts with SPAG5. Directly binds to microtubules, although at relatively low affinity. Interacts with CENPE; this interaction greatly favors microtubule-binding. Interacts with DSN1/MIS13; leading to localization to kinetochores. Interacts with MAPRE1/EB1; leading to localization to the microtubule plus ends. Interacts with PRPF19. Interacts with DYNLL1. Interacts with MAP4. Widely expressed, including in skin.

The protein localises to the nucleus. Its subcellular location is the chromosome. It localises to the centromere. The protein resides in the kinetochore. It is found in the cytoplasm. The protein localises to the cytoskeleton. Its subcellular location is the spindle pole. It localises to the microtubule organizing center. In terms of biological role, essential component of the mitotic spindle required for faithful chromosome segregation and progression into anaphase. Promotes the metaphase-to-anaphase transition and is required for chromosome alignment, normal timing of sister chromatid segregation, and maintenance of spindle pole architecture. The astrin (SPAG5)-kinastrin (SKAP) complex promotes stable microtubule-kinetochore attachments. Required for kinetochore oscillations and dynamics of microtubule plus-ends during live cell mitosis, possibly by forming a link between spindle microtubule plus-ends and mitotic chromosomes to achieve faithful cell division. May be involved in UV-induced apoptosis via its interaction with PRPF19; however, these results need additional evidences. This Homo sapiens (Human) protein is Small kinetochore-associated protein.